We begin with the raw amino-acid sequence, 483 residues long: Aspartyl/glutamyl-tRNA(Asn/Gln) amidotransferase subunit B (483 aa).

Belongs to the GatB/GatE family. GatB subfamily. In terms of assembly, heterotrimer of A, B and C subunits.

The enzyme catalyses L-glutamyl-tRNA(Gln) + L-glutamine + ATP + H2O = L-glutaminyl-tRNA(Gln) + L-glutamate + ADP + phosphate + H(+). It carries out the reaction L-aspartyl-tRNA(Asn) + L-glutamine + ATP + H2O = L-asparaginyl-tRNA(Asn) + L-glutamate + ADP + phosphate + 2 H(+). Allows the formation of correctly charged Asn-tRNA(Asn) or Gln-tRNA(Gln) through the transamidation of misacylated Asp-tRNA(Asn) or Glu-tRNA(Gln) in organisms which lack either or both of asparaginyl-tRNA or glutaminyl-tRNA synthetases. The reaction takes place in the presence of glutamine and ATP through an activated phospho-Asp-tRNA(Asn) or phospho-Glu-tRNA(Gln). The sequence is that of Aspartyl/glutamyl-tRNA(Asn/Gln) amidotransferase subunit B from Rickettsia bellii (strain RML369-C).